Here is a 64-residue protein sequence, read N- to C-terminus: SPbeta prophage-derived uncharacterized protein YonP (64 aa).

In Bacillus subtilis (strain 168), this protein is SPbeta prophage-derived uncharacterized protein YonP (yonP).